The primary structure comprises 70 residues: Large ribosomal subunit protein bL31 (70 aa).

4 residues coordinate Zn(2+): Cys16, Cys18, Cys37, and Cys40.

It belongs to the bacterial ribosomal protein bL31 family. Type A subfamily. As to quaternary structure, part of the 50S ribosomal subunit. The cofactor is Zn(2+).

In terms of biological role, binds the 23S rRNA. This is Large ribosomal subunit protein bL31 from Saccharophagus degradans (strain 2-40 / ATCC 43961 / DSM 17024).